The following is a 247-amino-acid chain: Protein GrpE (247 aa).

2 disordered regions span residues 1–64 and 214–247; these read MNDE…QALD and SMGPGPKDDGEETITEQSLEGDNTTDQQSSEKSD. 3 stretches are compositionally biased toward polar residues: residues 30-39, 49-63, and 228-241; these read DEPSLSNVAE, DVTSSDAKDSSSQAL, and TEQSLEGDNTTDQQ.

The protein belongs to the GrpE family. As to quaternary structure, homodimer.

The protein localises to the cytoplasm. Its function is as follows. Participates actively in the response to hyperosmotic and heat shock by preventing the aggregation of stress-denatured proteins, in association with DnaK and GrpE. It is the nucleotide exchange factor for DnaK and may function as a thermosensor. Unfolded proteins bind initially to DnaJ; upon interaction with the DnaJ-bound protein, DnaK hydrolyzes its bound ATP, resulting in the formation of a stable complex. GrpE releases ADP from DnaK; ATP binding to DnaK triggers the release of the substrate protein, thus completing the reaction cycle. Several rounds of ATP-dependent interactions between DnaJ, DnaK and GrpE are required for fully efficient folding. This Prochlorococcus marinus (strain MIT 9211) protein is Protein GrpE.